Here is a 348-residue protein sequence, read N- to C-terminus: EGF-like domain-containing protein 1 (348 aa).

The signal sequence occupies residues 1 to 19 (MFYLSTFMTIVISLSLVSC). The EGF-like domain occupies 60–92 (TGSNCTVTCQNNGKCYDGSKCLCSSDYTGDLCE). Disulfide bonds link cysteine 64/cysteine 74, cysteine 68/cysteine 80, and cysteine 82/cysteine 91. Residues 99–342 (RCTLDAVVFE…PTCAAPXVGQ (244 aa)) form the ZP domain.

As to expression, prismatic layer of shell (at protein level). Expressed primarily in the mantle with highest level in the mantle edge and lower level in the mantle pallium.

It is found in the secreted. This chain is EGF-like domain-containing protein 1, found in Pinctada maxima (Silver-lipped pearl oyster).